The primary structure comprises 276 residues: Large ribosomal subunit protein uL2c (276 aa).

The segment at 223-254 (VVKNPIDHPHGGGEGRSPIGRAKPVTPWGQPA) is disordered.

This sequence belongs to the universal ribosomal protein uL2 family. As to quaternary structure, part of the 50S ribosomal subunit.

Its subcellular location is the plastid. It localises to the chloroplast. This chain is Large ribosomal subunit protein uL2c (rpl2), found in Emiliania huxleyi (Coccolithophore).